A 765-amino-acid chain; its full sequence is LPS-assembly protein LptD (765 aa).

A signal peptide spans 1–18 (MQIRYFLALSLLPQLVLA).

The protein belongs to the LptD family. Component of the lipopolysaccharide transport and assembly complex. Interacts with LptE and LptA.

It is found in the cell outer membrane. Functionally, together with LptE, is involved in the assembly of lipopolysaccharide (LPS) at the surface of the outer membrane. The sequence is that of LPS-assembly protein LptD from Shewanella sp. (strain MR-4).